We begin with the raw amino-acid sequence, 250 residues long: Short-chain dehydrogenase RED3 (250 aa).

NADP(+)-binding residues include isoleucine 16, serine 35, glutamate 63, and asparagine 91. Active-site proton donor residues include serine 145 and tyrosine 164. 4 residues coordinate NADP(+): tyrosine 164, lysine 168, valine 195, and serine 197. Lysine 168 acts as the Lowers pKa of active site Tyr in catalysis.

The protein belongs to the short-chain dehydrogenases/reductases (SDR) family.

Its pathway is polyketide biosynthesis. Its function is as follows. Short-chain dehydrogenase; part of the gene cluster that mediates the biosynthesis of pyriculol and pyriculariol, two heptaketides that induce lesion formation upon application on rice leaves but are dispensable for pathogenicity. The highly reducing polyketide synthase synthesizes the heptaketide backbone of pyriculol and pyriculariol. Pyriculol and pyriculariol contain several hydroxyl moieties and double bonds, so it can be assumed that several reduction steps occur during biosynthesis. These reactions could be executed by PKS19 itself or partly by the tailoring enzymes OXR1, OXR2, RED1, RED2 or RED3, identified within the cluster. The FAD-linked oxidoreductase OXR1 is the only tailoring enzyme for which the function has been determined yet, and is involved in the oxidation of dihydropyriculol and dihydropyriculariol into pyriculol and pyriculariol, respectively. This Pyricularia oryzae (strain 70-15 / ATCC MYA-4617 / FGSC 8958) (Rice blast fungus) protein is Short-chain dehydrogenase RED3.